A 389-amino-acid chain; its full sequence is Probable protein phosphatase 2C 12 (389 aa).

Residues 42 to 356 enclose the PPM-type phosphatase domain; it reads VASLFSQRGK…DDCSAVCLFL (315 aa). Mn(2+) contacts are provided by D77 and G78. A disordered region spans residues 119–145; that stretch reads AFSDDAAASSSADSSGNSSPQPSASAS. Positions 121–145 are enriched in low complexity; that stretch reads SDDAAASSSADSSGNSSPQPSASAS. Residues D301 and D347 each contribute to the Mn(2+) site.

Belongs to the PP2C family. Mg(2+) serves as cofactor. It depends on Mn(2+) as a cofactor.

The enzyme catalyses O-phospho-L-seryl-[protein] + H2O = L-seryl-[protein] + phosphate. It carries out the reaction O-phospho-L-threonyl-[protein] + H2O = L-threonyl-[protein] + phosphate. This is Probable protein phosphatase 2C 12 from Oryza sativa subsp. japonica (Rice).